Reading from the N-terminus, the 170-residue chain is Aspartate 1-decarboxylase (170 aa).

Catalysis depends on Ser-25, which acts as the Schiff-base intermediate with substrate; via pyruvic acid. Position 25 is a pyruvic acid (Ser) (Ser-25). Thr-57 contributes to the substrate binding site. Catalysis depends on Tyr-58, which acts as the Proton donor. Residue 73 to 75 (GAA) coordinates substrate. The tract at residues 118-170 (GHDPAEALPDDPSSLRGDLAVPGNPVTAAARRGTPTHQAPVALPASRTVVAPR) is disordered.

This sequence belongs to the PanD family. Heterooctamer of four alpha and four beta subunits. The cofactor is pyruvate. Is synthesized initially as an inactive proenzyme, which is activated by self-cleavage at a specific serine bond to produce a beta-subunit with a hydroxyl group at its C-terminus and an alpha-subunit with a pyruvoyl group at its N-terminus.

It localises to the cytoplasm. It carries out the reaction L-aspartate + H(+) = beta-alanine + CO2. It functions in the pathway cofactor biosynthesis; (R)-pantothenate biosynthesis; beta-alanine from L-aspartate: step 1/1. Functionally, catalyzes the pyruvoyl-dependent decarboxylation of aspartate to produce beta-alanine. The sequence is that of Aspartate 1-decarboxylase from Frankia alni (strain DSM 45986 / CECT 9034 / ACN14a).